Here is a 444-residue protein sequence, read N- to C-terminus: Methylenetetrahydrofolate--tRNA-(uracil-5-)-methyltransferase TrmFO (444 aa).

10 to 15 (GAGLAG) provides a ligand contact to FAD.

The protein belongs to the MnmG family. TrmFO subfamily. FAD is required as a cofactor.

Its subcellular location is the cytoplasm. The enzyme catalyses uridine(54) in tRNA + (6R)-5,10-methylene-5,6,7,8-tetrahydrofolate + NADH + H(+) = 5-methyluridine(54) in tRNA + (6S)-5,6,7,8-tetrahydrofolate + NAD(+). It carries out the reaction uridine(54) in tRNA + (6R)-5,10-methylene-5,6,7,8-tetrahydrofolate + NADPH + H(+) = 5-methyluridine(54) in tRNA + (6S)-5,6,7,8-tetrahydrofolate + NADP(+). In terms of biological role, catalyzes the folate-dependent formation of 5-methyl-uridine at position 54 (M-5-U54) in all tRNAs. In Streptococcus pneumoniae serotype 2 (strain D39 / NCTC 7466), this protein is Methylenetetrahydrofolate--tRNA-(uracil-5-)-methyltransferase TrmFO.